Consider the following 307-residue polypeptide: HPr kinase/phosphorylase (307 aa).

Catalysis depends on residues His-136 and Lys-157. 151–158 (GESGIGKS) is an ATP binding site. Residue Ser-158 participates in Mg(2+) binding. Residue Asp-175 is the Proton acceptor; for phosphorylation activity. Proton donor; for dephosphorylation activity of the active site. Residues 198-207 (LEVRGMGIID) are important for the catalytic mechanism of both phosphorylation and dephosphorylation. A Mg(2+)-binding site is contributed by Glu-199. Residue Arg-240 is part of the active site. Residues 261–266 (PIRPGR) form an important for the catalytic mechanism of dephosphorylation region.

The protein belongs to the HPrK/P family. As to quaternary structure, homohexamer. Requires Mg(2+) as cofactor.

It catalyses the reaction [HPr protein]-L-serine + ATP = [HPr protein]-O-phospho-L-serine + ADP + H(+). It carries out the reaction [HPr protein]-O-phospho-L-serine + phosphate + H(+) = [HPr protein]-L-serine + diphosphate. Its function is as follows. Catalyzes the ATP- as well as the pyrophosphate-dependent phosphorylation of a specific serine residue in HPr, a phosphocarrier protein of the phosphoenolpyruvate-dependent sugar phosphotransferase system (PTS). HprK/P also catalyzes the pyrophosphate-producing, inorganic phosphate-dependent dephosphorylation (phosphorolysis) of seryl-phosphorylated HPr (P-Ser-HPr). The two antagonistic activities of HprK/P are regulated by several intracellular metabolites, which change their concentration in response to the absence or presence of rapidly metabolisable carbon sources (glucose, fructose, etc.) in the growth medium. Therefore, by controlling the phosphorylation state of HPr, HPrK/P is a sensor enzyme that plays a major role in the regulation of carbon metabolism and sugar transport: it mediates carbon catabolite repression (CCR), and regulates PTS-catalyzed carbohydrate uptake and inducer exclusion. This chain is HPr kinase/phosphorylase, found in Clostridium perfringens (strain ATCC 13124 / DSM 756 / JCM 1290 / NCIMB 6125 / NCTC 8237 / Type A).